A 492-amino-acid chain; its full sequence is Lysine--tRNA ligase (492 aa).

2 residues coordinate Mg(2+): glutamate 403 and glutamate 410.

It belongs to the class-II aminoacyl-tRNA synthetase family. Homodimer. The cofactor is Mg(2+).

Its subcellular location is the cytoplasm. The enzyme catalyses tRNA(Lys) + L-lysine + ATP = L-lysyl-tRNA(Lys) + AMP + diphosphate. The polypeptide is Lysine--tRNA ligase (Mycoplasmoides gallisepticum (strain R(low / passage 15 / clone 2)) (Mycoplasma gallisepticum)).